Here is a 587-residue protein sequence, read N- to C-terminus: Bifunctional dihydrofolate reductase-thymidylate synthase (587 aa).

The region spanning 9 to 237 (DIYAICACCK…TTLDFIIYSK (229 aa)) is the DHFR domain. Residue 36–42 (GIGNAGV) participates in NADP(+) binding. Asp-51 lines the substrate pocket. NADP(+)-binding positions include 108–110 (KKS) and 129–132 (LSRT). Substrate-binding residues include Ile-173, Tyr-179, and Thr-194. 174–181 (GGSSVYKE) contacts NADP(+). The interval 301-587 (NHPEYQYLNI…HDKINMDMAA (287 aa)) is thymidylate synthase. Arg-324 provides a ligand contact to dUMP. Cys-469 is an active-site residue. Residues His-470, 488–492 (QRSCD), Asn-500, and 530–532 (HVY) contribute to the dUMP site.

This sequence in the N-terminal section; belongs to the dihydrofolate reductase family. In the C-terminal section; belongs to the thymidylate synthase family. Homodimer.

The catalysed reaction is (6S)-5,6,7,8-tetrahydrofolate + NADP(+) = 7,8-dihydrofolate + NADPH + H(+). The enzyme catalyses dUMP + (6R)-5,10-methylene-5,6,7,8-tetrahydrofolate = 7,8-dihydrofolate + dTMP. It functions in the pathway cofactor biosynthesis; tetrahydrofolate biosynthesis; 5,6,7,8-tetrahydrofolate from 7,8-dihydrofolate: step 1/1. Its function is as follows. Bifunctional enzyme. Involved in de novo dTMP biosynthesis. Key enzyme in folate metabolism. Catalyzes an essential reaction for de novo glycine and purine synthesis, DNA precursor synthesis, and for the conversion of dUMP to dTMP. This is Bifunctional dihydrofolate reductase-thymidylate synthase from Plasmodium berghei (strain Anka).